We begin with the raw amino-acid sequence, 462 residues long: Dipeptidyl peptidase 1 (462 aa).

A signal peptide spans 1–24; sequence MGPWTHSLRAALLLVLLGVCTVSS. Residues N29 and N53 are each glycosylated (N-linked (GlcNAc...) asparagine). Cystine bridges form between C30-C118 and C54-C136. Positions 135–229 are excised as a propeptide; it reads ACFVGKKMAN…TDEIQQQILS (95 aa). An N-linked (GlcNAc...) asparagine glycan is attached at N144. Cystine bridges form between C254–C297, C290–C330, and C320–C336. The active site involves C257. N-linked (GlcNAc...) asparagine glycosylation is present at N275. F301 and Y303 together coordinate chloride. Chloride is bound at residue Y346. Active-site residues include H404 and N426.

The protein belongs to the peptidase C1 family. Tetramer of heterotrimers consisting of exclusion domain, heavy- and light chains. It depends on chloride as a cofactor. In terms of tissue distribution, broadly distributed, but higher levels found in liver, spleen, intestine, lung and kidney.

It localises to the lysosome. It carries out the reaction Release of an N-terminal dipeptide, Xaa-Yaa-|-Zaa-, except when Xaa is Arg or Lys, or Yaa or Zaa is Pro.. In terms of biological role, thiol protease. Has dipeptidylpeptidase activity. Active against a broad range of dipeptide substrates composed of both polar and hydrophobic amino acids. Proline cannot occupy the P1 position and arginine cannot occupy the P2 position of the substrate. Can act as both an exopeptidase and endopeptidase. Activates serine proteases such as elastase, cathepsin G and granzymes A and B. The sequence is that of Dipeptidyl peptidase 1 (Ctsc) from Rattus norvegicus (Rat).